The chain runs to 156 residues: Small ribosomal subunit protein uS7 (156 aa).

This sequence belongs to the universal ribosomal protein uS7 family. In terms of assembly, part of the 30S ribosomal subunit. Contacts proteins S9 and S11.

One of the primary rRNA binding proteins, it binds directly to 16S rRNA where it nucleates assembly of the head domain of the 30S subunit. Is located at the subunit interface close to the decoding center, probably blocks exit of the E-site tRNA. This is Small ribosomal subunit protein uS7 from Histophilus somni (strain 129Pt) (Haemophilus somnus).